Here is a 586-residue protein sequence, read N- to C-terminus: Asparagine synthetase [glutamine-hydrolyzing] 2 (586 aa).

The active-site For GATase activity is C2. The 184-residue stretch at 2–185 (CGILAVLGCS…PGHLYSSKEK (184 aa)) folds into the Glutamine amidotransferase type-2 domain. Residues 50–54 (RLAIV), 75–77 (NGE), and D98 contribute to the L-glutamine site. One can recognise an Asparagine synthetase domain in the interval 193–516 (PPWFSEAIPS…PQNSARLSVP (324 aa)). Residues L231, V267, and 341-342 (SG) contribute to the ATP site.

It catalyses the reaction L-aspartate + L-glutamine + ATP + H2O = L-asparagine + L-glutamate + AMP + diphosphate + H(+). Its pathway is amino-acid biosynthesis; L-asparagine biosynthesis; L-asparagine from L-aspartate (L-Gln route): step 1/1. This is Asparagine synthetase [glutamine-hydrolyzing] 2 (AS2) from Lotus japonicus (Lotus corniculatus var. japonicus).